The primary structure comprises 338 residues: Probable arabinan endo-1,5-alpha-L-arabinosidase A (338 aa).

The first 20 residues, 1-20 (MRASFVVTAPLLAAAVHGYA), serve as a signal peptide directing secretion. The active-site Proton acceptor is aspartate 33. The active-site Proton donor is the glutamate 217.

Belongs to the glycosyl hydrolase 43 family.

Its subcellular location is the secreted. The catalysed reaction is Endohydrolysis of (1-&gt;5)-alpha-arabinofuranosidic linkages in (1-&gt;5)-arabinans.. The protein operates within glycan metabolism; L-arabinan degradation. Its function is as follows. Endo-1,5-alpha-L-arabinanase involved in degradation of pectin. Its preferred substrate is linear 1,5-alpha-L-arabinan. This is Probable arabinan endo-1,5-alpha-L-arabinosidase A (abnA) from Aspergillus terreus (strain NIH 2624 / FGSC A1156).